Consider the following 682-residue polypeptide: Potassium-transporting ATPase ATP-binding subunit (682 aa).

Helical transmembrane passes span 34-54, 58-78, 219-239, and 254-274; these read PVMF…LAMV, IAGS…TVLF, IALT…TATL, and VLVA…LSAI. The 4-aspartylphosphate intermediate role is filled by D307. ATP contacts are provided by residues D344, E348, 377–384, and K395; that span reads FTAQSRMS. Positions 518 and 522 each coordinate Mg(2+). The next 3 helical transmembrane spans lie at 588 to 608, 616 to 636, and 662 to 682; these read FAII…LNVM, AILS…PLAL, and LVVP…LGLA.

The protein belongs to the cation transport ATPase (P-type) (TC 3.A.3) family. Type IA subfamily. The system is composed of three essential subunits: KdpA, KdpB and KdpC.

It is found in the cell inner membrane. It carries out the reaction K(+)(out) + ATP + H2O = K(+)(in) + ADP + phosphate + H(+). Part of the high-affinity ATP-driven potassium transport (or Kdp) system, which catalyzes the hydrolysis of ATP coupled with the electrogenic transport of potassium into the cytoplasm. This subunit is responsible for energy coupling to the transport system and for the release of the potassium ions to the cytoplasm. The sequence is that of Potassium-transporting ATPase ATP-binding subunit from Salmonella paratyphi A (strain ATCC 9150 / SARB42).